Here is a 114-residue protein sequence, read N- to C-terminus: MNKLIDEITKSQLNPDVPSFRPGDTVRVHAKVVEGTRERIQLFEGVVIKRRGAGISETFTVRKISNGVGVERTFPVHTPRIAKLEVIRRGKVRRAKLYYLRNLRGKAARIKEIR.

The protein belongs to the bacterial ribosomal protein bL19 family.

In terms of biological role, this protein is located at the 30S-50S ribosomal subunit interface and may play a role in the structure and function of the aminoacyl-tRNA binding site. The polypeptide is Large ribosomal subunit protein bL19 (rplS) (Listeria innocua serovar 6a (strain ATCC BAA-680 / CLIP 11262)).